Here is a 607-residue protein sequence, read N- to C-terminus: Elongation factor 4 (607 aa).

One can recognise a tr-type G domain in the interval 11 to 193 (SKIRNFSIIA…QIVEKVPAPT (183 aa)). GTP is bound by residues 23–28 (DHGKST) and 140–143 (NKID).

This sequence belongs to the TRAFAC class translation factor GTPase superfamily. Classic translation factor GTPase family. LepA subfamily.

Its subcellular location is the cell membrane. It catalyses the reaction GTP + H2O = GDP + phosphate + H(+). Required for accurate and efficient protein synthesis under certain stress conditions. May act as a fidelity factor of the translation reaction, by catalyzing a one-codon backward translocation of tRNAs on improperly translocated ribosomes. Back-translocation proceeds from a post-translocation (POST) complex to a pre-translocation (PRE) complex, thus giving elongation factor G a second chance to translocate the tRNAs correctly. Binds to ribosomes in a GTP-dependent manner. The sequence is that of Elongation factor 4 from Bacillus anthracis (strain CDC 684 / NRRL 3495).